The sequence spans 310 residues: Ribosomal RNA small subunit methyltransferase H (310 aa).

Residues 35–37, Asp52, Phe79, Asp100, and Gln107 contribute to the S-adenosyl-L-methionine site; that span reads GGH.

This sequence belongs to the methyltransferase superfamily. RsmH family.

It localises to the cytoplasm. It catalyses the reaction cytidine(1402) in 16S rRNA + S-adenosyl-L-methionine = N(4)-methylcytidine(1402) in 16S rRNA + S-adenosyl-L-homocysteine + H(+). Its function is as follows. Specifically methylates the N4 position of cytidine in position 1402 (C1402) of 16S rRNA. In Anaeromyxobacter dehalogenans (strain 2CP-1 / ATCC BAA-258), this protein is Ribosomal RNA small subunit methyltransferase H.